The chain runs to 425 residues: Histidine--tRNA ligase (425 aa).

This sequence belongs to the class-II aminoacyl-tRNA synthetase family. As to quaternary structure, homodimer.

It is found in the cytoplasm. The enzyme catalyses tRNA(His) + L-histidine + ATP = L-histidyl-tRNA(His) + AMP + diphosphate + H(+). The protein is Histidine--tRNA ligase of Shewanella sp. (strain W3-18-1).